Here is a 216-residue protein sequence, read N- to C-terminus: Ribosomal RNA small subunit methyltransferase G (216 aa).

Residues Gly83, Met88, 134–135, and Arg149 contribute to the S-adenosyl-L-methionine site; that span reads VE.

This sequence belongs to the methyltransferase superfamily. RNA methyltransferase RsmG family.

Its subcellular location is the cytoplasm. It catalyses the reaction guanosine(527) in 16S rRNA + S-adenosyl-L-methionine = N(7)-methylguanosine(527) in 16S rRNA + S-adenosyl-L-homocysteine. Specifically methylates the N7 position of guanine in position 527 of 16S rRNA. In Pseudomonas putida (strain GB-1), this protein is Ribosomal RNA small subunit methyltransferase G.